Reading from the N-terminus, the 294-residue chain is Elongation factor Ts (294 aa).

The segment at 81–84 (TDFV) is involved in Mg(2+) ion dislocation from EF-Tu.

Belongs to the EF-Ts family.

It localises to the cytoplasm. In terms of biological role, associates with the EF-Tu.GDP complex and induces the exchange of GDP to GTP. It remains bound to the aminoacyl-tRNA.EF-Tu.GTP complex up to the GTP hydrolysis stage on the ribosome. The chain is Elongation factor Ts from Lawsonia intracellularis (strain PHE/MN1-00).